Reading from the N-terminus, the 210-residue chain is Mitochondrial import receptor subunit TOM20-2 (210 aa).

M1 is modified (N-acetylmethionine). Topologically, residues 1 to 178 are cytoplasmic; sequence MEFSTADFER…SSKKKKRNTE (178 aa). 2 TPR repeats span residues 42 to 75 and 83 to 120; these read LLEL…NPGK and ANAY…DPGN. Positions 151 to 161 are enriched in gly residues; sequence GGGGGGGGGGM. Residues 151–172 are disordered; the sequence is GGGGGGGGGGMASSNVSQSSKK. The helical transmembrane segment at 179–199 threads the bilayer; sequence FTYDVCGWIILACGIVAWVGM. The Mitochondrial intermembrane segment spans residues 200–210; the sequence is AKSLGPPPPAR.

This sequence belongs to the Tom20 family. Forms part of the preprotein translocase complex of the outer mitochondrial membrane (TOM complex) which consists of at least 6 different proteins (TOM5, TOM6, TOM7, TOM20, TOM22/TOM9 and TOM40). Component of a mitochondrial large protein complex that contains, at least, MIC60, DGS1, TOM40, TOM20 proteins, and petC/RISP. In terms of processing, the N-terminus is blocked. Expressed in roots, flowers, young cotyledons and leaves.

It localises to the mitochondrion outer membrane. Functionally, central component of the receptor complex responsible for the recognition and translocation of cytosolically synthesized mitochondrial preproteins. Together with TOM22 functions as the transit peptide receptor at the surface of the mitochondrion outer membrane and facilitates the movement of preproteins into the translocation pore. In Arabidopsis thaliana (Mouse-ear cress), this protein is Mitochondrial import receptor subunit TOM20-2.